The sequence spans 532 residues: Pre-rRNA-processing protein pro-1 (532 aa).

WD repeat units lie at residues 136–175 and 287–326; these read AHYQNITKLALSDDDSMVFTASKDGAIHGYLVTELVSADR and GHSDEITRLTINTDGTLLASGDASGKYCIWEISSHQCLKV. A disordered region spans residues 435-464; it reads TLGDDEDDAPEVGNQRRQNKKNNKKNRKLQ. Residues 445-526 are a coiled coil; that stretch reads EVGNQRRQNK…INRQMYEFVA (82 aa). Residues 451-464 show a composition bias toward basic residues; sequence RQNKKNNKKNRKLQ.

Belongs to the WD repeat IPI3/WDR18 family. As to quaternary structure, component of the PELP1 complex, composed of at least PELP1, TEX10 and WDR18. The complex interacts with pre-60S ribosome particles.

It is found in the nucleus. The protein resides in the nucleolus. Its subcellular location is the nucleoplasm. Functionally, component of the PELP1 complex involved in the nucleolar steps of 28S rRNA maturation and the subsequent nucleoplasmic transit of the pre-60S ribosomal subunit. Required for processing ITS2 sequences from rRNA intermediates during 26S rRNA maturation. Required in the soma to promote normal proliferation and prevent germline tumor formation. This chain is Pre-rRNA-processing protein pro-1 (pro-1), found in Caenorhabditis briggsae.